The primary structure comprises 257 residues: MLAKRIVPCLDVKEGKVVKGVQFRNHEIVGDIVPLAKRYAEEGADELVFYDITASAHDRVIDKSWISRVAEKIDIPFCVAGGIRTIEQAREKLAFGADKISINSPALTDPSLIARLQDEFGRQCIVIGIDSYYDASSDSYRVKQFTGDEAATKDTQWYTQDWVEEVQKQGCGEIVLNVMNQDGVRQGYDIKQLSMIRSICDVPLIASGGAGTMAHFRDVFSRANVDAALAASVFHKGIIDIQELKQYLKDNQIAVRV.

Catalysis depends on residues Asp-11 and Asp-130.

It belongs to the HisA/HisF family. In terms of assembly, heterodimer of HisH and HisF.

Its subcellular location is the cytoplasm. It catalyses the reaction 5-[(5-phospho-1-deoxy-D-ribulos-1-ylimino)methylamino]-1-(5-phospho-beta-D-ribosyl)imidazole-4-carboxamide + L-glutamine = D-erythro-1-(imidazol-4-yl)glycerol 3-phosphate + 5-amino-1-(5-phospho-beta-D-ribosyl)imidazole-4-carboxamide + L-glutamate + H(+). It participates in amino-acid biosynthesis; L-histidine biosynthesis; L-histidine from 5-phospho-alpha-D-ribose 1-diphosphate: step 5/9. Functionally, IGPS catalyzes the conversion of PRFAR and glutamine to IGP, AICAR and glutamate. The HisF subunit catalyzes the cyclization activity that produces IGP and AICAR from PRFAR using the ammonia provided by the HisH subunit. The sequence is that of Imidazole glycerol phosphate synthase subunit HisF from Shewanella halifaxensis (strain HAW-EB4).